Reading from the N-terminus, the 169-residue chain is FAM231A/C-like protein LOC102723383 (169 aa).

The segment at 82–140 (LIRSGSSQNESQEDQGAGLISQAGLKADNRRESSTWANEVEDRRPQCTPALNLTPSHPH) is disordered.

Belongs to the FAM231 family.

The chain is FAM231A/C-like protein LOC102723383 from Homo sapiens (Human).